The chain runs to 480 residues: Aspartyl/glutamyl-tRNA(Asn/Gln) amidotransferase subunit B (480 aa).

It belongs to the GatB/GatE family. GatB subfamily. In terms of assembly, heterotrimer of A, B and C subunits.

The enzyme catalyses L-glutamyl-tRNA(Gln) + L-glutamine + ATP + H2O = L-glutaminyl-tRNA(Gln) + L-glutamate + ADP + phosphate + H(+). It catalyses the reaction L-aspartyl-tRNA(Asn) + L-glutamine + ATP + H2O = L-asparaginyl-tRNA(Asn) + L-glutamate + ADP + phosphate + 2 H(+). Allows the formation of correctly charged Asn-tRNA(Asn) or Gln-tRNA(Gln) through the transamidation of misacylated Asp-tRNA(Asn) or Glu-tRNA(Gln) in organisms which lack either or both of asparaginyl-tRNA or glutaminyl-tRNA synthetases. The reaction takes place in the presence of glutamine and ATP through an activated phospho-Asp-tRNA(Asn) or phospho-Glu-tRNA(Gln). This Streptococcus agalactiae serotype Ia (strain ATCC 27591 / A909 / CDC SS700) protein is Aspartyl/glutamyl-tRNA(Asn/Gln) amidotransferase subunit B.